Here is a 156-residue protein sequence, read N- to C-terminus: Small ribosomal subunit protein uS7 (156 aa).

This sequence belongs to the universal ribosomal protein uS7 family. Part of the 30S ribosomal subunit. Contacts proteins S9 and S11.

In terms of biological role, one of the primary rRNA binding proteins, it binds directly to 16S rRNA where it nucleates assembly of the head domain of the 30S subunit. Is located at the subunit interface close to the decoding center, probably blocks exit of the E-site tRNA. This is Small ribosomal subunit protein uS7 from Pelotomaculum thermopropionicum (strain DSM 13744 / JCM 10971 / SI).